The chain runs to 327 residues: Vacuolar protein sorting-associated protein 26A (327 aa).

The tract at residues Arg306–Met327 is disordered. A Phosphoserine modification is found at Ser315. A compositionally biased stretch (polar residues) spans Pro316–Met327.

The protein belongs to the VPS26 family. In terms of assembly, component of the heterotrimeric retromer cargo-selective complex (CSC), also described as vacuolar protein sorting subcomplex (VPS), formed by VPS26 (VPS26A or VPS26B), VPS29 and VPS35. The CSC has a highly elongated structure with VPS26 and VPS29 binding independently at opposite distal ends of VPS35 as central platform. The CSC is believed to associate with variable sorting nexins to form functionally distinct retromer complex variants. The originally described retromer complex (also called SNX-BAR retromer) is a pentamer containing the CSC and a heterodimeric membrane-deforming subcomplex formed between SNX1 or SNX2 and SNX5 or SNX6 (also called SNX-BAR subcomplex); the respective CSC and SNX-BAR subcomplexes associate with low affinity. The CSC associates with SNX3 to form a SNX3-retromer complex. The CSC associates with SNX27, the WASH complex and the SNX-BAR subcomplex to form the SNX27-retromer complex. Interacts with VPS29, VPS35, SNX27, SNX1, SNX2, SNX5, SNX6, SNX3, RAB7A, ECPAS, EHD1, WASHC5, SORL1.

The protein resides in the cytoplasm. Its subcellular location is the endosome membrane. The protein localises to the early endosome. Acts as a component of the retromer cargo-selective complex (CSC). The CSC is believed to be the core functional component of retromer or respective retromer complex variants acting to prevent missorting of selected transmembrane cargo proteins into the lysosomal degradation pathway. The recruitment of the CSC to the endosomal membrane involves RAB7A and SNX3. The SNX-BAR retromer mediates retrograde transport of cargo proteins from endosomes to the trans-Golgi network (TGN) and is involved in endosome-to-plasma membrane transport for cargo protein recycling. The SNX3-retromer mediates the retrograde endosome-to-TGN transport of WLS distinct from the SNX-BAR retromer pathway. The SNX27-retromer is believed to be involved in endosome-to-plasma membrane trafficking and recycling of a broad spectrum of cargo proteins. The CSC complex seems to act as recruitment hub for other proteins, such as the WASH complex and TBC1D5. Required for retrograde transport of lysosomal enzyme receptor IGF2R. Required to regulate transcytosis of the polymeric immunoglobulin receptor (pIgR-pIgA). Required for the endosomal localization of WASHC2 (indicative for the WASH complex). Required for the endosomal localization of TBC1D5. Mediates retromer cargo recognition of SORL1 and is involved in trafficking of SORL1 implicated in sorting and processing of APP. Involved in retromer-independent lysosomal sorting of F2R. Involved in recycling of ADRB2. Acts redundantly with VSP26B in SNX-27 mediated endocytic recycling of SLC2A1/GLUT1. Enhances the affinity of SNX27 for PDZ-binding motifs in cargo proteins. This is Vacuolar protein sorting-associated protein 26A (VPS26A) from Bos taurus (Bovine).